Here is a 739-residue protein sequence, read N- to C-terminus: Adenosylcobalamin-dependent ribonucleoside-triphosphate reductase (739 aa).

The cysteines at positions 119 and 419 are disulfide-linked. Residues 147-158 form an effector region-1 region; that stretch reads SMPFSFLFDELM. Residues 168 to 313 form an effector region-2 region; that stretch reads ARSNISQIPR…ICNLIGKAVV (146 aa). Active-site residues include Cys-408 and Glu-410. Positions 565-626 are adenosylcobalamin-binding-1; it reads FHYGAYLIQR…NPNFASAGTV (62 aa). The segment at 685 to 724 is adenosylcobalamin-binding-2; it reads LQQAPKEPIDKETYEKRSQEITGNVEEVFSQLNSDVKDLE.

This sequence belongs to the class II ribonucleoside-triphosphate reductase family. Monomer. Adenosylcob(III)alamin is required as a cofactor.

It catalyses the reaction a 2'-deoxyribonucleoside 5'-triphosphate + [thioredoxin]-disulfide + H2O = a ribonucleoside 5'-triphosphate + [thioredoxin]-dithiol. Allosterically regulated by ATP and dNTP. The polypeptide is Adenosylcobalamin-dependent ribonucleoside-triphosphate reductase (rtpR) (Lactobacillus leichmannii).